Reading from the N-terminus, the 151-residue chain is Small ribosomal subunit protein uS11 (151 aa).

The tract at residues Glu130–Leu151 is disordered. Positions Arg142–Leu151 are enriched in basic residues.

This sequence belongs to the universal ribosomal protein uS11 family.

The polypeptide is Small ribosomal subunit protein uS11 (Aedes aegypti (Yellowfever mosquito)).